Reading from the N-terminus, the 475-residue chain is Ribulose bisphosphate carboxylase large chain (475 aa).

The propeptide occupies 1–2 (MS). Proline 3 carries the post-translational modification N-acetylproline. An N6,N6,N6-trimethyllysine modification is found at lysine 14. The substrate site is built by asparagine 123 and threonine 173. Residue lysine 175 is the Proton acceptor of the active site. Residue lysine 177 coordinates substrate. Residues lysine 201, aspartate 203, and glutamate 204 each contribute to the Mg(2+) site. The residue at position 201 (lysine 201) is an N6-carboxylysine. Residue histidine 294 is the Proton acceptor of the active site. 3 residues coordinate substrate: arginine 295, histidine 327, and serine 379.

This sequence belongs to the RuBisCO large chain family. Type I subfamily. Heterohexadecamer of 8 large chains and 8 small chains; disulfide-linked. The disulfide link is formed within the large subunit homodimers. Mg(2+) is required as a cofactor. Post-translationally, the disulfide bond which can form in the large chain dimeric partners within the hexadecamer appears to be associated with oxidative stress and protein turnover.

Its subcellular location is the plastid. The protein resides in the chloroplast. It catalyses the reaction 2 (2R)-3-phosphoglycerate + 2 H(+) = D-ribulose 1,5-bisphosphate + CO2 + H2O. It carries out the reaction D-ribulose 1,5-bisphosphate + O2 = 2-phosphoglycolate + (2R)-3-phosphoglycerate + 2 H(+). RuBisCO catalyzes two reactions: the carboxylation of D-ribulose 1,5-bisphosphate, the primary event in carbon dioxide fixation, as well as the oxidative fragmentation of the pentose substrate in the photorespiration process. Both reactions occur simultaneously and in competition at the same active site. In Illicium oligandrum (Star anise), this protein is Ribulose bisphosphate carboxylase large chain.